A 584-amino-acid chain; its full sequence is Long-chain-fatty-acid--AMP ligase FadD23 (584 aa).

Helical transmembrane passes span 199 to 219 (YFADTGAVPPLDLFIMSWLPF) and 225 to 245 (LVLGVCAPIIVGCGAVLTSPV).

It belongs to the ATP-dependent AMP-binding enzyme family.

Its subcellular location is the membrane. It catalyses the reaction holo-[(hydroxy)phthioceranic acid synthase] + hexadecanoate + ATP = hexadecanoyl-[(hydroxy)phthioceranic acid synthase] + AMP + diphosphate. It carries out the reaction holo-[(hydroxy)phthioceranic acid synthase] + octadecanoate + ATP = octadecanoyl-[(hydroxy)phthioceranic acid synthase] + AMP + diphosphate. It functions in the pathway lipid metabolism; fatty acid biosynthesis. Catalyzes the activation of long-chain fatty acids as acyl-adenylates (acyl-AMP), which are then transferred to the multifunctional polyketide synthase (PKS) type III for further chain extension. Involved in the biosynthesis of sulfolipid 1 (SL-1). This is Long-chain-fatty-acid--AMP ligase FadD23 (fadD23) from Mycobacterium bovis (strain ATCC BAA-935 / AF2122/97).